A 510-amino-acid polypeptide reads, in one-letter code: JmjC domain-containing histone demethylation protein 1 (510 aa).

The segment at 2–53 (PNRCDFCTSSSTKDKQQWTQCDGCDRWVHDVCVSITDPVSYAKYHCPTCTKT) adopts a PHD-type zinc-finger fold. Residues 216-365 (TLVRELDLVD…TQIDIAGIEV (150 aa)) form the JmjC domain. Threonine 255 contacts substrate. Histidine 258 and aspartate 260 together coordinate Fe cation. Residue lysine 275 participates in substrate binding. A Fe cation-binding site is contributed by histidine 333. Residues 475–510 (KGESKEKHKIESQLPEEKILQGSKLESKEEVQTENF) are disordered. Over residues 477 to 510 (ESKEKHKIESQLPEEKILQGSKLESKEEVQTENF) the composition is skewed to basic and acidic residues.

The protein belongs to the JHDM1 histone demethylase family. Fe(2+) serves as cofactor.

It localises to the nucleus. It catalyses the reaction N(6),N(6)-dimethyl-L-lysyl(36)-[histone H3] + 2 2-oxoglutarate + 2 O2 = L-lysyl(36)-[histone H3] + 2 formaldehyde + 2 succinate + 2 CO2. Functionally, histone demethylase that specifically demethylates 'Lys-36' of histone H3, thereby playing a central role in histone code. This is JmjC domain-containing histone demethylation protein 1 (JHD1) from Yarrowia lipolytica (strain CLIB 122 / E 150) (Yeast).